Consider the following 316-residue polypeptide: UDP-N-acetylenolpyruvoylglucosamine reductase (316 aa).

The FAD-binding PCMH-type domain occupies 27–225 (VGGKAERFYR…KTAINALLKK (199 aa)). R190 is an active-site residue. S239 serves as the catalytic Proton donor. Residue E309 is part of the active site.

It belongs to the MurB family. It depends on FAD as a cofactor.

Its subcellular location is the cytoplasm. It carries out the reaction UDP-N-acetyl-alpha-D-muramate + NADP(+) = UDP-N-acetyl-3-O-(1-carboxyvinyl)-alpha-D-glucosamine + NADPH + H(+). It functions in the pathway cell wall biogenesis; peptidoglycan biosynthesis. Its function is as follows. Cell wall formation. The sequence is that of UDP-N-acetylenolpyruvoylglucosamine reductase from Coxiella burnetii (strain RSA 331 / Henzerling II).